A 115-amino-acid chain; its full sequence is U3-lycotoxin-Ls1l (115 aa).

Positions 1-20 are cleaved as a signal peptide; it reads MKFVLLFGVLLVTLFSYSSA. A propeptide spanning residues 21–44 is cleaved from the precursor; the sequence is EMLDDFDQADEDELLSLIEKEEAR. 3 cysteine pairs are disulfide-bonded: Cys55–Cys72, Cys62–Cys87, and Cys74–Cys85.

The protein belongs to the neurotoxin 19 (CSTX) family. 01 subfamily. As to expression, expressed by the venom gland.

Its subcellular location is the secreted. This Lycosa singoriensis (Wolf spider) protein is U3-lycotoxin-Ls1l.